The primary structure comprises 903 residues: HTH-type transcriptional regulator MalT (903 aa).

39-46 (CPAGYGKT) lines the ATP pocket. An HTH luxR-type domain is found at 832 to 897 (ELIRTSPLTQ…DAVQQAQRLL (66 aa)). Residues 856-875 (NDQIAGELEVAATTIKTHIR) constitute a DNA-binding region (H-T-H motif).

It belongs to the MalT family. Monomer in solution. Oligomerizes to an active state in the presence of the positive effectors ATP and maltotriose.

Its activity is regulated as follows. Activated by ATP and maltotriose, which are both required for DNA binding. Positively regulates the transcription of the maltose regulon whose gene products are responsible for uptake and catabolism of malto-oligosaccharides. Specifically binds to the promoter region of its target genes, recognizing a short DNA motif called the MalT box. The protein is HTH-type transcriptional regulator MalT of Yersinia enterocolitica serotype O:8 / biotype 1B (strain NCTC 13174 / 8081).